The following is a 201-amino-acid chain: Recombination protein RecR (201 aa).

The C4-type zinc finger occupies 60–75; that stretch reads CSRCGNVDTVDPCTVC. The region spanning 83–178 is the Toprim domain; the sequence is SIIIVVEDVS…KITRLAHGVP (96 aa).

This sequence belongs to the RecR family.

May play a role in DNA repair. It seems to be involved in an RecBC-independent recombinational process of DNA repair. It may act with RecF and RecO. The sequence is that of Recombination protein RecR from Rhizobium leguminosarum bv. trifolii (strain WSM2304).